A 73-amino-acid chain; its full sequence is MPQTQELDQRIAELEMKIAFQENTLEELNQALIDQQFVLDKMQLQLRYMASKLKDLQSSNIATQAEETPPPHY.

This sequence belongs to the SlyX family.

This is Protein SlyX homolog from Histophilus somni (strain 129Pt) (Haemophilus somnus).